The chain runs to 378 residues: Chorismate synthase (378 aa).

Arg-49 contacts NADP(+). FMN-binding positions include 126–128 (RAS), Gly-287, 302–306 (KPTAT), and Arg-328.

It belongs to the chorismate synthase family. In terms of assembly, homotetramer. It depends on FMNH2 as a cofactor.

The catalysed reaction is 5-O-(1-carboxyvinyl)-3-phosphoshikimate = chorismate + phosphate. It functions in the pathway metabolic intermediate biosynthesis; chorismate biosynthesis; chorismate from D-erythrose 4-phosphate and phosphoenolpyruvate: step 7/7. In terms of biological role, catalyzes the anti-1,4-elimination of the C-3 phosphate and the C-6 proR hydrogen from 5-enolpyruvylshikimate-3-phosphate (EPSP) to yield chorismate, which is the branch point compound that serves as the starting substrate for the three terminal pathways of aromatic amino acid biosynthesis. This reaction introduces a second double bond into the aromatic ring system. The polypeptide is Chorismate synthase (Synechococcus sp. (strain JA-3-3Ab) (Cyanobacteria bacterium Yellowstone A-Prime)).